Consider the following 518-residue polypeptide: Zinc finger protein 449 (518 aa).

In terms of domain architecture, SCAN box spans 30 to 112; the sequence is RQRFRQFQYR…SLIEDLQREL (83 aa). Polar residues predominate over residues 292–304; that stretch reads NPTLGETPENSNL. The tract at residues 292–325 is disordered; that stretch reads NPTLGETPENSNLEEPLNPKPHKKKSPGEKPHRC. 7 C2H2-type zinc fingers span residues 323-345, 351-373, 379-401, 407-429, 435-457, 463-485, and 491-513; these read HRCP…QRIH, HKCP…QRLH, YECT…QRTH, YKCL…LKTH, HRCH…QRTH, FKCN…LRIH, and YKCT…QVTH.

It belongs to the krueppel C2H2-type zinc-finger protein family.

Its subcellular location is the nucleus. May be involved in transcriptional regulation. In Gorilla gorilla gorilla (Western lowland gorilla), this protein is Zinc finger protein 449 (ZNF449).